The chain runs to 470 residues: Neuraminidase (470 aa).

Topologically, residues 1–6 (MNPNQK) are intravirion. A helical transmembrane segment spans residues 7-27 (IITIGSASIVLTTIGLLLQIT). The tract at residues 11–33 (GSASIVLTTIGLLLQITSLCSIW) is involved in apical transport and lipid raft association. Residues 28–470 (SLCSIWFSHY…GALLPFDIDK (443 aa)) lie on the Virion surface side of the membrane. Residues 36 to 88 (HYNQVTQPHEQACSNNTTNYYNETFVNVTNVQNNYTTIIEPSAPNVVHYSSGR) are hypervariable stalk region. N-linked (GlcNAc...) asparagine; by host glycosylation is found at asparagine 50, asparagine 51, asparagine 57, asparagine 62, and asparagine 69. The head of neuraminidase stretch occupies residues 90–470 (LCPVKGWAPL…GALLPFDIDK (381 aa)). 8 disulfide bridges follow: cysteine 91-cysteine 418, cysteine 123-cysteine 128, cysteine 183-cysteine 230, cysteine 232-cysteine 237, cysteine 278-cysteine 291, cysteine 280-cysteine 289, cysteine 317-cysteine 334, and cysteine 422-cysteine 447. Arginine 117 serves as a coordination point for substrate. An N-linked (GlcNAc...) asparagine; by host glycan is attached at asparagine 145. Aspartate 150 (proton donor/acceptor) is an active-site residue. Arginine 151 serves as a coordination point for substrate. Asparagine 269 carries an N-linked (GlcNAc...) asparagine; by host glycan. 276 to 277 (EE) is a binding site for substrate. Arginine 292 serves as a coordination point for substrate. 3 residues coordinate Ca(2+): aspartate 293, glycine 297, and aspartate 323. Arginine 369 lines the substrate pocket. Asparagine 399 carries N-linked (GlcNAc...) asparagine; by host glycosylation. Tyrosine 403 serves as the catalytic Nucleophile. N-linked (GlcNAc...) asparagine; by host glycosylation occurs at asparagine 417.

Belongs to the glycosyl hydrolase 34 family. Homotetramer. It depends on Ca(2+) as a cofactor. In terms of processing, N-glycosylated.

It localises to the virion membrane. Its subcellular location is the host apical cell membrane. The enzyme catalyses Hydrolysis of alpha-(2-&gt;3)-, alpha-(2-&gt;6)-, alpha-(2-&gt;8)- glycosidic linkages of terminal sialic acid residues in oligosaccharides, glycoproteins, glycolipids, colominic acid and synthetic substrates.. Inhibited by the neuraminidase inhibitors zanamivir (Relenza) and oseltamivir (Tamiflu). These drugs interfere with the release of progeny virus from infected cells and are effective against all influenza strains. Resistance to neuraminidase inhibitors is quite rare. In terms of biological role, catalyzes the removal of terminal sialic acid residues from viral and cellular glycoconjugates. Cleaves off the terminal sialic acids on the glycosylated HA during virus budding to facilitate virus release. Additionally helps virus spread through the circulation by further removing sialic acids from the cell surface. These cleavages prevent self-aggregation and ensure the efficient spread of the progeny virus from cell to cell. Otherwise, infection would be limited to one round of replication. Described as a receptor-destroying enzyme because it cleaves a terminal sialic acid from the cellular receptors. May facilitate viral invasion of the upper airways by cleaving the sialic acid moieties on the mucin of the airway epithelial cells. Likely to plays a role in the budding process through its association with lipid rafts during intracellular transport. May additionally display a raft-association independent effect on budding. Plays a role in the determination of host range restriction on replication and virulence. Sialidase activity in late endosome/lysosome traffic seems to enhance virus replication. The polypeptide is Neuraminidase (Influenza A virus (strain A/Turkey/Ontario/6118/1968 H8N4)).